The chain runs to 199 residues: Adenylyl-sulfate kinase (199 aa).

35-42 (GLSGSGKS) lines the ATP pocket. Ser-109 acts as the Phosphoserine intermediate in catalysis.

Belongs to the APS kinase family.

It carries out the reaction adenosine 5'-phosphosulfate + ATP = 3'-phosphoadenylyl sulfate + ADP + H(+). The protein operates within sulfur metabolism; hydrogen sulfide biosynthesis; sulfite from sulfate: step 2/3. Its function is as follows. Catalyzes the synthesis of activated sulfate. This Clostridium kluyveri (strain ATCC 8527 / DSM 555 / NBRC 12016 / NCIMB 10680 / K1) protein is Adenylyl-sulfate kinase.